The following is an 800-amino-acid chain: Phenylalanine--tRNA ligase beta subunit (800 aa).

Residues threonine 39 to leucine 154 enclose the tRNA-binding domain. The B5 domain maps to alanine 408 to serine 483. Mg(2+) is bound by residues aspartate 461, aspartate 467, glutamate 470, and glutamate 471. The 93-residue stretch at proline 708–arginine 800 folds into the FDX-ACB domain.

It belongs to the phenylalanyl-tRNA synthetase beta subunit family. Type 1 subfamily. As to quaternary structure, tetramer of two alpha and two beta subunits. Mg(2+) is required as a cofactor.

It localises to the cytoplasm. It carries out the reaction tRNA(Phe) + L-phenylalanine + ATP = L-phenylalanyl-tRNA(Phe) + AMP + diphosphate + H(+). The protein is Phenylalanine--tRNA ligase beta subunit of Staphylococcus aureus (strain MRSA252).